A 475-amino-acid polypeptide reads, in one-letter code: Sensor histidine kinase QseE (475 aa).

Residues 1-13 lie on the Cytoplasmic side of the membrane; sequence MKRWPVFPRSLRQ. The chain crosses the membrane as a helical span at residues 14–34; sequence LVMLAFLLILLPLLVLAWQAW. Residues 35-173 are Periplasmic-facing; that stretch reads QSLNALSDQA…LQREIAERGQ (139 aa). Residues 174-194 form a helical membrane-spanning segment; sequence YFGWQSLVLFLVSLVMVLLFT. Over 195–475 the chain is Cytoplasmic; that stretch reads RMIIGPVKNI…IELPSSKNTK (281 aa). Residues 256-472 enclose the Histidine kinase domain; it reads HLSHELKTPL…CFRIELPSSK (217 aa). Phosphohistidine; by autocatalysis is present on His259.

Autophosphorylated.

It is found in the cell inner membrane. It catalyses the reaction ATP + protein L-histidine = ADP + protein N-phospho-L-histidine.. Functionally, member of the two-component regulatory system QseF/QseE involved in the regulation of virulence and metabolism in EHEC. Required for pedestal formation in host epithelial cells during infection. Autophosphorylates in response to epinephrine, sulfate or phosphate and then probably transfers its phosphate group to QseF. This chain is Sensor histidine kinase QseE (qseE), found in Escherichia coli O157:H7.